The following is a 160-amino-acid chain: Large ribosomal subunit protein eL21A (160 aa).

Lys32 is covalently cross-linked (Glycyl lysine isopeptide (Lys-Gly) (interchain with G-Cter in ubiquitin)).

This sequence belongs to the eukaryotic ribosomal protein eL21 family. Component of the large ribosomal subunit (LSU). Mature yeast ribosomes consist of a small (40S) and a large (60S) subunit. The 40S small subunit contains 1 molecule of ribosomal RNA (18S rRNA) and 33 different proteins (encoded by 57 genes). The large 60S subunit contains 3 rRNA molecules (25S, 5.8S and 5S rRNA) and 46 different proteins (encoded by 81 genes).

The protein resides in the cytoplasm. Its function is as follows. Component of the ribosome, a large ribonucleoprotein complex responsible for the synthesis of proteins in the cell. The small ribosomal subunit (SSU) binds messenger RNAs (mRNAs) and translates the encoded message by selecting cognate aminoacyl-transfer RNA (tRNA) molecules. The large subunit (LSU) contains the ribosomal catalytic site termed the peptidyl transferase center (PTC), which catalyzes the formation of peptide bonds, thereby polymerizing the amino acids delivered by tRNAs into a polypeptide chain. The nascent polypeptides leave the ribosome through a tunnel in the LSU and interact with protein factors that function in enzymatic processing, targeting, and the membrane insertion of nascent chains at the exit of the ribosomal tunnel. The sequence is that of Large ribosomal subunit protein eL21A from Saccharomyces cerevisiae (strain ATCC 204508 / S288c) (Baker's yeast).